Here is a 541-residue protein sequence, read N- to C-terminus: Tripeptidyl aminopeptidase (541 aa).

A signal peptide spans 1–36; that stretch reads MRKSSIRRRATAFGTAGALVTATLIAGAVSAPAASA. Residues 37–39 constitute a propeptide that is removed on maturation; the sequence is APA. Positions 123-501 constitute an AB hydrolase-1 domain; the sequence is GALIYNPGGP…SRLITERDAG (379 aa). Catalysis depends on serine 249, which acts as the Nucleophile. Aspartate 474 is an active-site residue. The Proton donor role is filled by histidine 503.

Belongs to the peptidase S33 family.

The protein resides in the secreted. Functionally, cleaves tripeptides from the N-termini of proteins. Does not cleave mono- or dipeptides, or N-terminally blocked peptides. The chain is Tripeptidyl aminopeptidase from Streptomyces coelicolor (strain ATCC BAA-471 / A3(2) / M145).